We begin with the raw amino-acid sequence, 369 residues long: Homoserine O-succinyltransferase (369 aa).

An AB hydrolase-1 domain is found at 49–328 (NAVFICHALT…RFDSTQSARM (280 aa)). Catalysis depends on S154, which acts as the Nucleophile. Substrate is bound at residue R224. Active-site residues include D317 and H350. Position 351 (D351) interacts with substrate.

It belongs to the AB hydrolase superfamily. MetX family. Homodimer.

It is found in the cytoplasm. The enzyme catalyses L-homoserine + succinyl-CoA = O-succinyl-L-homoserine + CoA. The protein operates within amino-acid biosynthesis; L-methionine biosynthesis via de novo pathway; O-succinyl-L-homoserine from L-homoserine: step 1/1. Transfers a succinyl group from succinyl-CoA to L-homoserine, forming succinyl-L-homoserine. In Nocardioides sp. (strain ATCC BAA-499 / JS614), this protein is Homoserine O-succinyltransferase.